A 400-amino-acid polypeptide reads, in one-letter code: Phosphoglycerate kinase (400 aa).

Substrate-binding positions include 21 to 23, R36, 59 to 62, R116, and R149; these read DLN and HLGR. ATP contacts are provided by residues K200, E317, and 343 to 346; that span reads GGDT.

Belongs to the phosphoglycerate kinase family. Monomer.

The protein resides in the cytoplasm. The enzyme catalyses (2R)-3-phosphoglycerate + ATP = (2R)-3-phospho-glyceroyl phosphate + ADP. The protein operates within carbohydrate degradation; glycolysis; pyruvate from D-glyceraldehyde 3-phosphate: step 2/5. In Blochmanniella floridana, this protein is Phosphoglycerate kinase.